The primary structure comprises 500 residues: NAD(P)H-quinone oxidoreductase chain 4, chloroplastic (500 aa).

14 helical membrane passes run 4–24, 35–55, 87–107, 113–130, 134–154, 167–187, 208–228, 242–262, 274–294, 305–325, 330–350, 386–406, 411–431, and 462–482; these read FPWLTIIVVFPIFAGSLIFFL, YTICICILELLLTTYAFCYHF, IGPILLTGFITTLATLAAWPV, LFHFLMLAMYSGQIGSFS, LLLFFIMWELELIPVYLLLCM, FILYTAGGSVFLLMGVLGLAL, VLEIIFYIGFFIAFAVKSPII, HYSTCMLLAGILLKMGAYGLI, SIFSPWLMIIGTIQIIYAALT, IAYSSVSHMGFIIIGISSLTD, GALLQIISHGFIGAALFFLAG, LALPGMSGFVAELIVFFGIIT, LLIPKILITFVMAIGMILTPI, and LFLSISIFLPVIGIGIYPDFV.

It belongs to the complex I subunit 4 family.

The protein localises to the plastid. Its subcellular location is the chloroplast thylakoid membrane. The enzyme catalyses a plastoquinone + NADH + (n+1) H(+)(in) = a plastoquinol + NAD(+) + n H(+)(out). It carries out the reaction a plastoquinone + NADPH + (n+1) H(+)(in) = a plastoquinol + NADP(+) + n H(+)(out). The chain is NAD(P)H-quinone oxidoreductase chain 4, chloroplastic (ndhD) from Nicotiana tabacum (Common tobacco).